Here is a 446-residue protein sequence, read N- to C-terminus: Glutamyl-tRNA reductase (446 aa).

Substrate-binding positions include 49 to 52 (TCNR), S108, 113 to 115 (ETQ), and Q119. C50 (nucleophile) is an active-site residue. NADP(+) is bound at residue 188 to 193 (GAGKMS).

Belongs to the glutamyl-tRNA reductase family. In terms of assembly, homodimer.

The enzyme catalyses (S)-4-amino-5-oxopentanoate + tRNA(Glu) + NADP(+) = L-glutamyl-tRNA(Glu) + NADPH + H(+). The protein operates within porphyrin-containing compound metabolism; protoporphyrin-IX biosynthesis; 5-aminolevulinate from L-glutamyl-tRNA(Glu): step 1/2. Catalyzes the NADPH-dependent reduction of glutamyl-tRNA(Glu) to glutamate 1-semialdehyde (GSA). This is Glutamyl-tRNA reductase from Desulforudis audaxviator (strain MP104C).